Consider the following 727-residue polypeptide: 1,4-alpha-glucan branching enzyme GlgB (727 aa).

Catalysis depends on aspartate 405, which acts as the Nucleophile. The active-site Proton donor is glutamate 458.

Belongs to the glycosyl hydrolase 13 family. GlgB subfamily. Monomer.

It catalyses the reaction Transfers a segment of a (1-&gt;4)-alpha-D-glucan chain to a primary hydroxy group in a similar glucan chain.. Its pathway is glycan biosynthesis; glycogen biosynthesis. Catalyzes the formation of the alpha-1,6-glucosidic linkages in glycogen by scission of a 1,4-alpha-linked oligosaccharide from growing alpha-1,4-glucan chains and the subsequent attachment of the oligosaccharide to the alpha-1,6 position. This chain is 1,4-alpha-glucan branching enzyme GlgB, found in Yersinia pseudotuberculosis serotype I (strain IP32953).